The chain runs to 569 residues: 5'-AMP-activated protein kinase subunit gamma-2 (569 aa).

Positions 1–222 are disordered; it reads MGSAVMDTKK…TRPPLASPTH (222 aa). Residues serine 65, serine 71, serine 73, serine 90, serine 138, serine 143, serine 161, and serine 162 each carry the phosphoserine modification. Residues 156–167 show a composition bias toward low complexity; sequence TSGLSSSPSTPT. The residue at position 165 (threonine 165) is a Phosphothreonine. Over residues 179–189 the composition is skewed to basic and acidic residues; it reads SYKHEPERLEN. Residues 192–212 show a composition bias toward polar residues; it reads YASSSPPDTGQRFCPSSFQSP. A Phosphoserine modification is found at serine 196. CBS domains follow at residues 275-335, 357-415, and 430-492; these read PTSS…KSPM, TFKP…MSDM, and IGTY…NLDI. Residues arginine 302, 317–322, valine 362, 383–384, and lysine 402 each bind ADP; these read MLTITD and HR. AMP contacts are provided by residues arginine 302, 317-322, valine 362, histidine 383, 383-384, lysine 402, threonine 432, alanine 437, 458-459, 474-477, arginine 501, histidine 530, 530-531, and 546-549; these read MLTITD, HR, SA, SKFD, and SLSD. ATP is bound by residues arginine 302, 317–322, valine 362, 383–384, arginine 384, and lysine 402; these read MLTITD and HR. Residues 370-391 carry the AMPK pseudosubstrate motif; it reads LFDAVYSLIKNKIHRLPVIDPI. ADP-binding positions include 474 to 477, arginine 501, and 530 to 531; these read SKFD and HR. Residues 474 to 477, arginine 501, and 530 to 531 each bind ATP; these read SKFD and HR. Positions 504 to 562 constitute a CBS 4 domain; the sequence is YFEGVVKCNKLEILETIVDRIVRAEVHRLVVVNEADSIVGIISLSDILQALILTPAGAK.

This sequence belongs to the 5'-AMP-activated protein kinase gamma subunit family. In terms of assembly, AMPK is a heterotrimer of an alpha catalytic subunit (PRKAA1 or PRKAA2), a beta (PRKAB1 or PRKAB2) and a gamma non-catalytic subunits (PRKAG1, PRKAG2 or PRKAG3). Interacts with FNIP1 and FNIP2. In terms of processing, phosphorylated by ULK1; leading to negatively regulate AMPK activity and suggesting the existence of a regulatory feedback loop between ULK1 and AMPK. Post-translationally, glycosylated; O-GlcNAcylated by OGT, promoting the AMP-activated protein kinase (AMPK) activity. In terms of tissue distribution, isoform B is ubiquitously expressed except in liver and thymus. The highest level is detected in heart with abundant expression in placenta and testis.

In terms of biological role, AMP/ATP-binding subunit of AMP-activated protein kinase (AMPK), an energy sensor protein kinase that plays a key role in regulating cellular energy metabolism. In response to reduction of intracellular ATP levels, AMPK activates energy-producing pathways and inhibits energy-consuming processes: inhibits protein, carbohydrate and lipid biosynthesis, as well as cell growth and proliferation. AMPK acts via direct phosphorylation of metabolic enzymes, and by longer-term effects via phosphorylation of transcription regulators. Also acts as a regulator of cellular polarity by remodeling the actin cytoskeleton; probably by indirectly activating myosin. Gamma non-catalytic subunit mediates binding to AMP, ADP and ATP, leading to activate or inhibit AMPK: AMP-binding results in allosteric activation of alpha catalytic subunit (PRKAA1 or PRKAA2) both by inducing phosphorylation and preventing dephosphorylation of catalytic subunits. ADP also stimulates phosphorylation, without stimulating already phosphorylated catalytic subunit. ATP promotes dephosphorylation of catalytic subunit, rendering the AMPK enzyme inactive. The chain is 5'-AMP-activated protein kinase subunit gamma-2 (PRKAG2) from Homo sapiens (Human).